The chain runs to 201 residues: Small ribosomal subunit protein uS4c (201 aa).

Residues 15–44 (LGALPGLTNKRPRAGSDLRNQSRSGKKSQY) are disordered. Positions 89–149 (MRLDNILFRL…DEQNSRALIQ (61 aa)) constitute an S4 RNA-binding domain.

It belongs to the universal ribosomal protein uS4 family. In terms of assembly, part of the 30S ribosomal subunit. Contacts protein S5. The interaction surface between S4 and S5 is involved in control of translational fidelity.

The protein resides in the plastid. The protein localises to the chloroplast. Its function is as follows. One of the primary rRNA binding proteins, it binds directly to 16S rRNA where it nucleates assembly of the body of the 30S subunit. With S5 and S12 plays an important role in translational accuracy. The protein is Small ribosomal subunit protein uS4c (rps4) of Daucus carota (Wild carrot).